The sequence spans 943 residues: AP-1 complex subunit beta-1 (943 aa).

N6-acetyllysine is present on K318. Residue Y574 is modified to 3'-nitrotyrosine. The segment at 584 to 621 is disordered; sequence GGRGVVHKSLPPRTASSESTESPETAPAGAPAGDQPDV. Low complexity predominate over residues 594–616; the sequence is PPRTASSESTESPETAPAGAPAG.

This sequence belongs to the adaptor complexes large subunit family. In terms of assembly, adaptor protein complex 1 (AP-1) is a heterotetramer composed of two large adaptins (gamma-type subunit AP1G1 and beta-type subunit AP1B1), a medium adaptin (mu-type subunit AP1M1 or AP1M2) and a small adaptin (sigma-type subunit AP1S1 or AP1S2 or AP1S3). Widely expressed.

Its subcellular location is the cytoplasmic vesicle. The protein resides in the clathrin-coated vesicle membrane. It localises to the golgi apparatus. Subunit of clathrin-associated adaptor protein complex 1 that plays a role in protein sorting in the late-Golgi/trans-Golgi network (TGN) and/or endosomes. The AP complexes mediate both the recruitment of clathrin to membranes and the recognition of sorting signals within the cytosolic tails of transmembrane cargo molecules. The chain is AP-1 complex subunit beta-1 (Ap1b1) from Mus musculus (Mouse).